Consider the following 163-residue polypeptide: D-aminoacyl-tRNA deacylase (163 aa).

Residues 141 to 142 (GP) carry the Gly-cisPro motif, important for rejection of L-amino acids motif.

It belongs to the DTD family. In terms of assembly, homodimer.

It localises to the cytoplasm. It catalyses the reaction glycyl-tRNA(Ala) + H2O = tRNA(Ala) + glycine + H(+). The catalysed reaction is a D-aminoacyl-tRNA + H2O = a tRNA + a D-alpha-amino acid + H(+). In terms of biological role, an aminoacyl-tRNA editing enzyme that deacylates mischarged D-aminoacyl-tRNAs. Also deacylates mischarged glycyl-tRNA(Ala), protecting cells against glycine mischarging by AlaRS. Acts via tRNA-based rather than protein-based catalysis; rejects L-amino acids rather than detecting D-amino acids in the active site. By recycling D-aminoacyl-tRNA to D-amino acids and free tRNA molecules, this enzyme counteracts the toxicity associated with the formation of D-aminoacyl-tRNA entities in vivo and helps enforce protein L-homochirality. In Neisseria meningitidis serogroup A / serotype 4A (strain DSM 15465 / Z2491), this protein is D-aminoacyl-tRNA deacylase.